We begin with the raw amino-acid sequence, 438 residues long: UDP-N-acetylglucosamine 1-carboxyvinyltransferase (438 aa).

Residue 35–36 participates in phosphoenolpyruvate binding; sequence KN. UDP-N-acetyl-alpha-D-glucosamine is bound at residue Arg-105. The active-site Proton donor is the Cys-129. Cys-129 is modified (2-(S-cysteinyl)pyruvic acid O-phosphothioketal). Residues 134-138, Asp-321, and Val-343 each bind UDP-N-acetyl-alpha-D-glucosamine; that span reads RPVDL.

This sequence belongs to the EPSP synthase family. MurA subfamily.

The protein localises to the cytoplasm. The catalysed reaction is phosphoenolpyruvate + UDP-N-acetyl-alpha-D-glucosamine = UDP-N-acetyl-3-O-(1-carboxyvinyl)-alpha-D-glucosamine + phosphate. It participates in cell wall biogenesis; peptidoglycan biosynthesis. Cell wall formation. Adds enolpyruvyl to UDP-N-acetylglucosamine. In Synechocystis sp. (strain ATCC 27184 / PCC 6803 / Kazusa), this protein is UDP-N-acetylglucosamine 1-carboxyvinyltransferase.